Consider the following 532-residue polypeptide: CTP synthase (532 aa).

Residues 1-267 form an amidoligase domain region; that stretch reads MAKFIFVTGG…QDIIIEQLQL (267 aa). Residue Ser-13 coordinates CTP. Ser-13 lines the UTP pocket. 14-19 lines the ATP pocket; that stretch reads GLGKGI. Tyr-54 is an L-glutamine binding site. Residue Asp-71 coordinates ATP. Asp-71 and Glu-141 together coordinate Mg(2+). CTP-binding positions include 148–150, 188–193, and Lys-224; these read DIE and KTKPIQ. UTP-binding positions include 188 to 193 and Lys-224; that span reads KTKPIQ. A Glutamine amidotransferase type-1 domain is found at 292–532; that stretch reads EISFVGKYIE…FIKAIIENNK (241 aa). Gly-354 contacts L-glutamine. Cys-381 (nucleophile; for glutamine hydrolysis) is an active-site residue. L-glutamine contacts are provided by residues 382 to 385, Glu-405, and Arg-461; that span reads LGMQ. Catalysis depends on residues His-506 and Glu-508.

It belongs to the CTP synthase family. As to quaternary structure, homotetramer.

The enzyme catalyses UTP + L-glutamine + ATP + H2O = CTP + L-glutamate + ADP + phosphate + 2 H(+). It catalyses the reaction L-glutamine + H2O = L-glutamate + NH4(+). It carries out the reaction UTP + NH4(+) + ATP = CTP + ADP + phosphate + 2 H(+). Its pathway is pyrimidine metabolism; CTP biosynthesis via de novo pathway; CTP from UDP: step 2/2. With respect to regulation, allosterically activated by GTP, when glutamine is the substrate; GTP has no effect on the reaction when ammonia is the substrate. The allosteric effector GTP functions by stabilizing the protein conformation that binds the tetrahedral intermediate(s) formed during glutamine hydrolysis. Inhibited by the product CTP, via allosteric rather than competitive inhibition. In terms of biological role, catalyzes the ATP-dependent amination of UTP to CTP with either L-glutamine or ammonia as the source of nitrogen. Regulates intracellular CTP levels through interactions with the four ribonucleotide triphosphates. The protein is CTP synthase of Mycoplasma capricolum subsp. capricolum (strain California kid / ATCC 27343 / NCTC 10154).